The sequence spans 407 residues: Large ribosomal subunit protein uL4y (407 aa).

The disordered stretch occupies residues 57–96 (PYAVSKKAGHQTSAESWGTGRAVSRIPRVPGGGTHRAGQA).

This sequence belongs to the universal ribosomal protein uL4 family.

This chain is Large ribosomal subunit protein uL4y (RPL4D), found in Arabidopsis thaliana (Mouse-ear cress).